Here is a 498-residue protein sequence, read N- to C-terminus: Lysine--tRNA ligase (498 aa).

Mg(2+) contacts are provided by E401 and E408.

This sequence belongs to the class-II aminoacyl-tRNA synthetase family. As to quaternary structure, homodimer. Requires Mg(2+) as cofactor.

The protein resides in the cytoplasm. The catalysed reaction is tRNA(Lys) + L-lysine + ATP = L-lysyl-tRNA(Lys) + AMP + diphosphate. This is Lysine--tRNA ligase from Dehalococcoides mccartyi (strain ATCC BAA-2266 / KCTC 15142 / 195) (Dehalococcoides ethenogenes (strain 195)).